The following is a 1024-amino-acid chain: Error-prone DNA polymerase (1024 aa).

This sequence belongs to the DNA polymerase type-C family. DnaE2 subfamily.

It localises to the cytoplasm. The enzyme catalyses DNA(n) + a 2'-deoxyribonucleoside 5'-triphosphate = DNA(n+1) + diphosphate. Its function is as follows. DNA polymerase involved in damage-induced mutagenesis and translesion synthesis (TLS). It is not the major replicative DNA polymerase. The sequence is that of Error-prone DNA polymerase from Vibrio campbellii (strain ATCC BAA-1116).